The primary structure comprises 405 residues: S-adenosylmethionine:tRNA ribosyltransferase-isomerase (405 aa).

This sequence belongs to the QueA family. Monomer.

It localises to the cytoplasm. It catalyses the reaction 7-aminomethyl-7-carbaguanosine(34) in tRNA + S-adenosyl-L-methionine = epoxyqueuosine(34) in tRNA + adenine + L-methionine + 2 H(+). It participates in tRNA modification; tRNA-queuosine biosynthesis. Transfers and isomerizes the ribose moiety from AdoMet to the 7-aminomethyl group of 7-deazaguanine (preQ1-tRNA) to give epoxyqueuosine (oQ-tRNA). This is S-adenosylmethionine:tRNA ribosyltransferase-isomerase from Psychrobacter cryohalolentis (strain ATCC BAA-1226 / DSM 17306 / VKM B-2378 / K5).